Here is a 382-residue protein sequence, read N- to C-terminus: UBP1-associated proteins 1B (382 aa).

Residues 1–99 (MAKEGEERKK…SDESEEIVDS (99 aa)) form a disordered region. Over residues 10 to 22 (KEKKEKKERKERK) the composition is skewed to basic residues. The segment covering 23-34 (RREAEELAVREK) has biased composition (basic and acidic residues). The RRM domain maps to 163–248 (RNIFVRGLGW…RPFNSGKPRE (86 aa)).

It is found in the nucleus. Functionally, acts as a component of a complex regulating the turnover of mRNAs in the nucleus. Binds with high affinity to RNA molecules that contain U-rich sequences in 3'-UTRs. May function in complex with UBP1 and contribute to the stabilization of mRNAs in the nucleus. This Arabidopsis thaliana (Mouse-ear cress) protein is UBP1-associated proteins 1B (UBA1B).